The following is a 321-amino-acid chain: MHKYQTHWVEHSIVKILSSTGKKHIALMAGGMSAEREVSLVSSEGVSKALIELGYRVTFIDMGADIAVRLQEIKPDIVFNCLHGTYGEDGGLPGLLNIMRIPYTHSGVLSSALAFDKIHSRIWFLTNNINMAESIVVNKSDNIKNDPMKRPYVIKPLTQGSSIGVEVIFAEDDFNFADYDFPYGDQVIIEQYIKGRELQVAVLNGKALGALEIKLLKNRFYDYETKYTAGFADHLCPAPLPANLYEKLLIESEKIYKTMNCKGPARAEFILEEQTNKLYALEINTHPGMMSLSIVPEIAAYAGINFTNLIEEIIKTASFES.

The ATP-grasp domain occupies 121–315 (RIWFLTNNIN…FTNLIEEIIK (195 aa)). 147–199 (PMKRPYVIKPLTQGSSIGVEVIFAEDDFNFADYDFPYGDQVIIEQYIKGRELQ) provides a ligand contact to ATP. 3 residues coordinate Mg(2+): Glu-268, Glu-282, and Asn-284.

It belongs to the D-alanine--D-alanine ligase family. Requires Mg(2+) as cofactor. Mn(2+) serves as cofactor.

It localises to the cytoplasm. The enzyme catalyses 2 D-alanine + ATP = D-alanyl-D-alanine + ADP + phosphate + H(+). It participates in cell wall biogenesis; peptidoglycan biosynthesis. Functionally, cell wall formation. The sequence is that of D-alanine--D-alanine ligase from Rickettsia rickettsii (strain Iowa).